A 475-amino-acid polypeptide reads, in one-letter code: Zinc-regulated GTPase metalloprotein activator 1 (475 aa).

50–57 (GFLGSGKT) is a binding site for GTP. 3 residues coordinate Zn(2+): Cys-116, Cys-118, and Cys-119. Residues 116 to 119 (CICC) carry the CXCC motif motif. Residues 119 to 123 (CTMRE) and 229 to 232 (NKCD) each bind GTP. The 119-residue stretch at 302 to 420 (IKSFIYKARR…LIESELNNCL (119 aa)) folds into the CobW C-terminal domain. A coiled-coil region spans residues 440 to 467 (IQLDEELEEEELEEEEEEGEYKDEIEMK). The span at 445–460 (ELEEEELEEEEEEGEY) shows a compositional bias: acidic residues. The segment at 445–475 (ELEEEELEEEEEEGEYKDEIEMKVDGSKFKK) is disordered. Positions 461–475 (KDEIEMKVDGSKFKK) are enriched in basic and acidic residues.

It belongs to the SIMIBI class G3E GTPase family. ZNG1 subfamily.

It catalyses the reaction GTP + H2O = GDP + phosphate + H(+). Zinc chaperone that directly transfers zinc cofactor to target metalloproteins, thereby activating them. Zinc is transferred from the CXCC motif in the GTPase domain to the zinc binding site in target proteins in a process requiring GTP hydrolysis. The polypeptide is Zinc-regulated GTPase metalloprotein activator 1 (Dictyostelium discoideum (Social amoeba)).